The following is a 176-amino-acid chain: NAD(P)H-quinone oxidoreductase subunit 6, chloroplastic (176 aa).

Transmembrane regions (helical) follow at residues 10 to 30, 32 to 52, 61 to 81, 92 to 112, and 152 to 172; these read FLLV…VLLP, PIFS…LYIL, AQLL…VMFM, LWTV…FSLM, and FFLP…GAIS.

Belongs to the complex I subunit 6 family. In terms of assembly, NDH is composed of at least 16 different subunits, 5 of which are encoded in the nucleus.

It is found in the plastid. The protein resides in the chloroplast thylakoid membrane. It carries out the reaction a plastoquinone + NADH + (n+1) H(+)(in) = a plastoquinol + NAD(+) + n H(+)(out). The catalysed reaction is a plastoquinone + NADPH + (n+1) H(+)(in) = a plastoquinol + NADP(+) + n H(+)(out). Functionally, NDH shuttles electrons from NAD(P)H:plastoquinone, via FMN and iron-sulfur (Fe-S) centers, to quinones in the photosynthetic chain and possibly in a chloroplast respiratory chain. The immediate electron acceptor for the enzyme in this species is believed to be plastoquinone. Couples the redox reaction to proton translocation, and thus conserves the redox energy in a proton gradient. The chain is NAD(P)H-quinone oxidoreductase subunit 6, chloroplastic (ndhG) from Nasturtium officinale (Watercress).